A 200-amino-acid chain; its full sequence is Potassium-transporting ATPase KdpC subunit (200 aa).

The chain crosses the membrane as a helical span at residues 6–26 (PAVVLLILLTLITGIAYPLLT).

This sequence belongs to the KdpC family. The system is composed of three essential subunits: KdpA, KdpB and KdpC.

Its subcellular location is the cell inner membrane. Functionally, part of the high-affinity ATP-driven potassium transport (or Kdp) system, which catalyzes the hydrolysis of ATP coupled with the electrogenic transport of potassium into the cytoplasm. This subunit acts as a catalytic chaperone that increases the ATP-binding affinity of the ATP-hydrolyzing subunit KdpB by the formation of a transient KdpB/KdpC/ATP ternary complex. The chain is Potassium-transporting ATPase KdpC subunit from Yersinia enterocolitica serotype O:8 / biotype 1B (strain NCTC 13174 / 8081).